We begin with the raw amino-acid sequence, 178 residues long: ATP synthase subunit delta (178 aa).

Belongs to the ATPase delta chain family. As to quaternary structure, F-type ATPases have 2 components, F(1) - the catalytic core - and F(0) - the membrane proton channel. F(1) has five subunits: alpha(3), beta(3), gamma(1), delta(1), epsilon(1). F(0) has three main subunits: a(1), b(2) and c(10-14). The alpha and beta chains form an alternating ring which encloses part of the gamma chain. F(1) is attached to F(0) by a central stalk formed by the gamma and epsilon chains, while a peripheral stalk is formed by the delta and b chains.

The protein resides in the cell inner membrane. F(1)F(0) ATP synthase produces ATP from ADP in the presence of a proton or sodium gradient. F-type ATPases consist of two structural domains, F(1) containing the extramembraneous catalytic core and F(0) containing the membrane proton channel, linked together by a central stalk and a peripheral stalk. During catalysis, ATP synthesis in the catalytic domain of F(1) is coupled via a rotary mechanism of the central stalk subunits to proton translocation. Functionally, this protein is part of the stalk that links CF(0) to CF(1). It either transmits conformational changes from CF(0) to CF(1) or is implicated in proton conduction. The polypeptide is ATP synthase subunit delta (Nitrosomonas europaea (strain ATCC 19718 / CIP 103999 / KCTC 2705 / NBRC 14298)).